Here is a 168-residue protein sequence, read N- to C-terminus: DNA damage-inducible transcript 3 protein (168 aa).

Residues 10–18 are interaction with TRIB3; sequence LETVSSWEL. The interval 10–26 is N-terminal; sequence LETVSSWELEAWYEDLQ. Residues serine 14, serine 15, serine 30, and serine 31 each carry the phosphoserine; by CK2 modification. Residues 30 to 43 are compositionally biased toward polar residues; sequence SSDENGGPYSSSLG. Positions 30-168 are disordered; the sequence is SSDENGGPYS…DRPHVNLQQV (139 aa). Residues 74–87 show a composition bias toward low complexity; it reads SSSQSPRSPDSSQS. A phosphoserine; by MAPK14 mark is found at serine 78 and serine 81. The region spanning 98–161 is the bZIP domain; that stretch reads GRTRKRKQSG…EATRPGSDRP (64 aa). Residues 101–129 form a basic motif region; the sequence is RKRKQSGQCPARGTGKQRMKEKEQENERK. Basic and acidic residues predominate over residues 118–162; that stretch reads RMKEKEQENERKVAQLAEENERLKQEIERLTREVEATRPGSDRPH. Residues 133–147 form a leucine-zipper region; it reads LAEENERLKQEIERL.

The protein belongs to the bZIP family. Heterodimer. Interacts with TCF7L2/TCF4, EP300/P300, HDAC1, HDAC5 and HDAC6. Interacts with TRIB3 which blocks its association with EP300/P300. Interacts with FOXO3, CEBPB and ATF4. Ubiquitinated, leading to its degradation by the proteasome. Post-translationally, phosphorylation at serine residues by MAPK14 enhances its transcriptional activation activity while phosphorylation at serine residues by CK2 inhibits its transcriptional activation activity.

The protein resides in the cytoplasm. The protein localises to the nucleus. Functionally, multifunctional transcription factor in ER stress response. Plays an essential role in the response to a wide variety of cell stresses and induces cell cycle arrest and apoptosis in response to ER stress. Plays a dual role both as an inhibitor of CCAAT/enhancer-binding protein (C/EBP) function and as an activator of other genes. Acts as a dominant-negative regulator of C/EBP-induced transcription: dimerizes with members of the C/EBP family, impairs their association with C/EBP binding sites in the promoter regions, and inhibits the expression of C/EBP regulated genes. Positively regulates the transcription of TRIB3, IL6, IL8, IL23, TNFRSF10B/DR5, PPP1R15A/GADD34, BBC3/PUMA, BCL2L11/BIM and ERO1L. Negatively regulates; expression of BCL2 and MYOD1, ATF4-dependent transcriptional activation of asparagine synthetase (ASNS), CEBPA-dependent transcriptional activation of hepcidin (HAMP) and CEBPB-mediated expression of peroxisome proliferator-activated receptor gamma (PPARG). Inhibits the canonical Wnt signaling pathway by binding to TCF7L2/TCF4, impairing its DNA-binding properties and repressing its transcriptional activity. Plays a regulatory role in the inflammatory response through the induction of caspase-11 (CASP4/CASP11) which induces the activation of caspase-1 (CASP1) and both these caspases increase the activation of pro-IL1B to mature IL1B which is involved in the inflammatory response. This is DNA damage-inducible transcript 3 protein (DDIT3) from Cricetulus griseus (Chinese hamster).